Here is a 385-residue protein sequence, read N- to C-terminus: Hsp70/Hsp90 co-chaperone CNS1 (385 aa).

The tract at residues 1-37 (MSSVNANGGYTKPQKYVPGPGDPELPPQLSEFKDKTS) is disordered. TPR repeat units follow at residues 83–116 (AENF…ECED), 121–154 (ESLY…NPKN), and 155–189 (VKCY…DPEN).

Belongs to the TTC4 family. As to quaternary structure, monomer. Component of Hsp70 and Hsp90 chaperone complexes. Interacts (via TPR repeats) with HSC82 and HSP82 (via C-terminal MEEVD pentapeptide). Interacts with CPR7, SSA1 and SPI1.

The protein localises to the cytoplasm. Co-chaperone that binds to the molecular chaperones Hsp90 (HSC82 and HSP82) and Hsp70 (SSA1). Stimulates SSA1 ATPase activity, but not Hsp90 ATPase activity. Involved in only a subset of Hsp90 functions. The polypeptide is Hsp70/Hsp90 co-chaperone CNS1 (CNS1) (Saccharomyces cerevisiae (strain ATCC 204508 / S288c) (Baker's yeast)).